We begin with the raw amino-acid sequence, 191 residues long: Inosine triphosphate pyrophosphatase (191 aa).

12 to 17 (TGNANK) is a binding site for ITP. Glu-42 contributes to the Mg(2+) binding site. ITP is bound by residues Lys-54, 70 to 71 (DT), Lys-87, 145 to 148 (FGWD), Lys-168, and 173 to 174 (HR).

Belongs to the HAM1 NTPase family. Homodimer. The cofactor is Mg(2+). It depends on Mn(2+) as a cofactor.

It is found in the cytoplasm. It catalyses the reaction ITP + H2O = IMP + diphosphate + H(+). The enzyme catalyses dITP + H2O = dIMP + diphosphate + H(+). The catalysed reaction is XTP + H2O = XMP + diphosphate + H(+). Its function is as follows. Pyrophosphatase that hydrolyzes non-canonical purine nucleotides such as inosine triphosphate (ITP), deoxyinosine triphosphate (dITP) or xanthosine 5'-triphosphate (XTP) to their respective monophosphate derivatives. The enzyme does not distinguish between the deoxy- and ribose forms. Probably excludes non-canonical purines from RNA and DNA precursor pools, thus preventing their incorporation into RNA and DNA and avoiding chromosomal lesions. The sequence is that of Inosine triphosphate pyrophosphatase from Phytophthora infestans (strain T30-4) (Potato late blight agent).